Reading from the N-terminus, the 336-residue chain is Zinc-type alcohol dehydrogenase-like protein SE_1777 (336 aa).

The protein belongs to the zinc-containing alcohol dehydrogenase family. Quinone oxidoreductase subfamily.

The protein is Zinc-type alcohol dehydrogenase-like protein SE_1777 of Staphylococcus epidermidis (strain ATCC 12228 / FDA PCI 1200).